Consider the following 91-residue polypeptide: Acylphosphatase (91 aa).

Residues 6–91 (CMRCYISGRV…WKDYISFDVL (86 aa)) enclose the Acylphosphatase-like domain. Catalysis depends on residues arginine 21 and asparagine 39.

This sequence belongs to the acylphosphatase family.

The catalysed reaction is an acyl phosphate + H2O = a carboxylate + phosphate + H(+). This Legionella pneumophila (strain Paris) protein is Acylphosphatase (acyP).